The primary structure comprises 534 residues: Protein tweety homolog 2 (534 aa).

Residues methionine 1–serine 44 are Extracellular-facing. Residue asparagine 31 is glycosylated (N-linked (GlcNAc...) asparagine). The helical transmembrane segment at leucine 45 to alanine 65 threads the bilayer. Residues tyrosine 66–cysteine 87 are Cytoplasmic-facing. A helical membrane pass occupies residues cysteine 88–phenylalanine 108. Residues tyrosine 109–tryptophan 213 lie on the Extracellular side of the membrane. The Ca(2+) site is built by glutamate 113 and aspartate 116. N-linked (GlcNAc) asparagine glycosylation is present at asparagine 129. The RGD motif lies at arginine 164–aspartate 166. A Phosphothreonine modification is found at threonine 199. Residues leucine 214 to leucine 234 traverse the membrane as a helical segment. Over alanine 235–cysteine 240 the chain is Cytoplasmic. Residues leucine 241–alanine 261 traverse the membrane as a helical segment. Topologically, residues alanine 262–glycine 388 are extracellular. 2 disulfide bridges follow: cysteine 274–cysteine 382 and cysteine 300–cysteine 367. The N-linked (GlcNAc...) asparagine glycan is linked to asparagine 283. A glycan (N-linked (GlcNAc) asparagine) is linked at asparagine 352. The helical transmembrane segment at leucine 389–alanine 409 threads the bilayer. The Cytoplasmic segment spans residues glycine 410–alanine 534. At serine 504 the chain carries Phosphoserine. The PY-motif; mediates interaction with NEDD4L signature appears at proline 506–tyrosine 509.

Belongs to the tweety family. In terms of assembly, homodimer. Forms cis-homodimers in the presence of Ca(+2) and forms monomers and trans-dimers in the absence of Ca(2+). Interacts with NEDD4L. In terms of processing, N- Glycosylated. Contains high-mannose, hybrid and complex oligosaccharides. Ubiquitinated by NEDD4L, leading to its proteasomal degradation. As to expression, expressed at higher level in brain and testis and at lower levels in heart, ovary, spleen and peripheral blood leukocytes. Up-regulated in 13 of 16 renal cell carcinoma samples examined. Up-regulated in colon carcinoma.

It localises to the cell membrane. The enzyme catalyses chloride(in) = chloride(out). The catalysed reaction is L-glutamate(out) = L-glutamate(in). Calcium-independent, swelling-dependent volume-regulated anion channel (VRAC-swell) which plays a pivotal role in the process of regulatory volume decrease (RVD) in the brain through the efflux of anions like chloride and organic osmolytes like glutamate. Probable large-conductance Ca(2+)-activated chloride channel. This chain is Protein tweety homolog 2 (TTYH2), found in Homo sapiens (Human).